Reading from the N-terminus, the 86-residue chain is Small ribosomal subunit protein bS20 (86 aa).

Over residues 1–11 (MANHKSALKRA) the composition is skewed to basic residues. The segment at 1–27 (MANHKSALKRARQNEERRIRNRARKTR) is disordered.

This sequence belongs to the bacterial ribosomal protein bS20 family.

In terms of biological role, binds directly to 16S ribosomal RNA. The protein is Small ribosomal subunit protein bS20 of Syntrophobacter fumaroxidans (strain DSM 10017 / MPOB).